Reading from the N-terminus, the 309-residue chain is 1,4-dihydroxy-2-naphthoyl-CoA synthase (309 aa).

Residues Arg-53, 98-102 (SGGDQ), Tyr-110, 152-156 (WAAGG), Thr-179, Ser-185, Tyr-282, and Lys-297 contribute to the substrate site.

It belongs to the enoyl-CoA hydratase/isomerase family. MenB subfamily.

It carries out the reaction 2-succinylbenzoyl-CoA + H(+) = 1,4-dihydroxy-2-naphthoyl-CoA + H2O. It functions in the pathway quinol/quinone metabolism; 1,4-dihydroxy-2-naphthoate biosynthesis; 1,4-dihydroxy-2-naphthoate from chorismate: step 6/7. The protein operates within quinol/quinone metabolism; menaquinone biosynthesis. Converts o-succinylbenzoyl-CoA (OSB-CoA) to 1,4-dihydroxy-2-naphthoyl-CoA (DHNA-CoA). The protein is 1,4-dihydroxy-2-naphthoyl-CoA synthase of Mycolicibacterium smegmatis (strain ATCC 700084 / mc(2)155) (Mycobacterium smegmatis).